Reading from the N-terminus, the 425-residue chain is MAFLALGINHKTASVDVRERVAFTPEQLVEALQQLCHLTESREAAILSTCNRSELYIEHEHLGADSILAWLANYHHLSLEELRASAYVHEDDAAVRHMMRVASGLDSLVLGEPQILGQMKSAYAVAREAGTVGPLLGRLFQATFSAAKQVRTDTAIGENPVSVAFAAVSLAKQIFSDLQRSQALLIGAGETITLVARHLHDLGVKRIVVANRTLERASMLAAEFGAHAVLLSDIPAELVNSDIVISSTASQLPILGKGAVESALKLRKHKPIFMVDIAVPRDIEPEVGELDDVYLYSVDDLHEVVAENLKSRQGAALAAEQLVSVGAEDFMSRLRELAAVDVLRAYRQQSERLRDEELSKAQRMLANGSNAEDVLIQLARGLTNKLLHAPSVQLKKLSAEGRVDALAMAQELFALGEGSTDKTPQ.

Substrate-binding positions include 49–52 (TCNR), S107, 112–114 (EPQ), and Q118. The Nucleophile role is filled by C50. 187-192 (GAGETI) is a binding site for NADP(+).

It belongs to the glutamyl-tRNA reductase family. Homodimer.

The catalysed reaction is (S)-4-amino-5-oxopentanoate + tRNA(Glu) + NADP(+) = L-glutamyl-tRNA(Glu) + NADPH + H(+). Its pathway is porphyrin-containing compound metabolism; protoporphyrin-IX biosynthesis; 5-aminolevulinate from L-glutamyl-tRNA(Glu): step 1/2. Functionally, catalyzes the NADPH-dependent reduction of glutamyl-tRNA(Glu) to glutamate 1-semialdehyde (GSA). The protein is Glutamyl-tRNA reductase of Pseudomonas savastanoi pv. phaseolicola (strain 1448A / Race 6) (Pseudomonas syringae pv. phaseolicola (strain 1448A / Race 6)).